The primary structure comprises 1053 residues: LRR receptor-like serine/threonine-protein kinase GHR1 (1053 aa).

A signal peptide spans 1-18 (MNLSRILLLSMFFLSAMG). Over 19-630 (QLPSQDIMAL…NKSTNKLVKV (612 aa)) the chain is Extracellular. LRR repeat units follow at residues 73–93 (GVVL…FSNL), 94–119 (TKLV…SFKS), 121–141 (QFLD…IGRS), 142–165 (VSLR…MGGL), 166–189 (ISLQ…LTRL), 191–212 (DLLY…GFEL), 213–237 (ISSL…FFLL), 239–260 (NASY…LLPG), 262–285 (SESI…GFQL), 286–309 (FQNL…FNYV), 310–333 (YDLE…LLKG), 335–357 (SLLL…SIMS), and 358–384 (TTLH…CVLL). N-linked (GlcNAc...) asparagine glycosylation is present at asparagine 92. Residues serine 100 and serine 102 each carry the phosphoserine; by HT1 modification. N-linked (GlcNAc...) asparagine glycosylation occurs at asparagine 103. Phosphoserine; by HT1 is present on residues serine 105 and serine 126. Asparagine 146 and asparagine 153 each carry an N-linked (GlcNAc...) asparagine glycan. Residue asparagine 196 is glycosylated (N-linked (GlcNAc...) asparagine). N-linked (GlcNAc...) asparagine glycosylation is present at asparagine 239. A Phosphoserine; by HT1 modification is found at serine 262. Asparagine 269 carries N-linked (GlcNAc...) asparagine glycosylation. Serine 278 is subject to Phosphoserine; by HT1. Residue threonine 280 is modified to Phosphothreonine; by HT1. Serine 281 bears the Phosphoserine; by HT1 mark. Serine 325 carries the post-translational modification Phosphoserine; by HT1. The N-linked (GlcNAc...) asparagine glycan is linked to asparagine 347. Asparagine 394 is a glycosylation site (N-linked (GlcNAc...) asparagine). 8 LRR repeats span residues 401–425 (WENI…TPQL), 426–449 (LRAN…IPTH), 450–474 (YPKL…LLSM), 476–498 (TLEE…PSSG), 499–521 (SRIR…VFGS), 522–546 (LTNL…MNDI), 548–570 (SLSS…LSSN), and 572–592 (MAFN…LKNF). Position 406 is a phosphotyrosine; by HT1 (tyrosine 406). Serine 410 carries the post-translational modification Phosphoserine; by HT1. Threonine 415 carries the phosphothreonine; by HT1 modification. Residue serine 417 is modified to Phosphoserine; by HT1. The N-linked (GlcNAc...) asparagine glycan is linked to asparagine 432. Serine 434 bears the Phosphoserine; by HT1 mark. N-linked (GlcNAc...) asparagine glycosylation is found at asparagine 534, asparagine 566, and asparagine 575. Residues serine 613, serine 614, and serine 616 each carry the phosphoserine; by HT1 modification. A glycan (N-linked (GlcNAc...) asparagine) is linked at asparagine 621. A helical transmembrane segment spans residues 631 to 651 (VIIVSCAVALIILILVAILLF). At 652–1053 (CICKSRRREE…KTIYEDLSSI (402 aa)) the chain is on the cytoplasmic side. Over residues 662–671 (RSITGKETNR) the composition is skewed to basic and acidic residues. Residues 662–684 (RSITGKETNRRAQTIPSGSGGGM) are disordered. Phosphothreonine; by HT1 occurs at positions 669 and 675. Residues serine 678, serine 680, serine 698, serine 699, and serine 700 each carry the phosphoserine; by HT1 modification. Serine 704 bears the Phosphoserine mark. The residue at position 713 (threonine 713) is a Phosphothreonine; by HT1. Residues serine 716 and serine 718 each carry the phosphoserine; by HT1 modification. Threonine 720 is modified (phosphothreonine; by HT1). Serine 721, serine 724, and serine 760 each carry phosphoserine; by HT1. Threonine 764 is subject to Phosphothreonine; by HT1. Serine 769 carries the post-translational modification Phosphoserine; by HT1. The Protein kinase domain maps to 770 to 1053 (RAPAEVLGRS…KTIYEDLSSI (284 aa)). Residues 776–784 (LGRSSHGTS) and lysine 798 each bind ATP. Residues threonine 928 and threonine 1010 each carry the phosphothreonine; by HT1 modification. Position 1015 is a phosphoserine; by HT1 (serine 1015). A Phosphothreonine; by HT1 modification is found at threonine 1045. Residue tyrosine 1047 is modified to Phosphotyrosine; by HT1. A phosphoserine; by HT1 mark is found at serine 1051 and serine 1052.

This sequence belongs to the protein kinase superfamily. Ser/Thr protein kinase family. In terms of assembly, interacts with SLAC1 (via N-terminus). Binds to ABI2, but not ABI1. Interacts with CPK3. Phosphorylated by HT1; this phosphorylation is inhibited by MPK12 and MPK4. In terms of tissue distribution, expressed in guard cells and in the vasculature of roots and leaves.

Its subcellular location is the cell membrane. The catalysed reaction is L-seryl-[protein] + ATP = O-phospho-L-seryl-[protein] + ADP + H(+). It catalyses the reaction L-threonyl-[protein] + ATP = O-phospho-L-threonyl-[protein] + ADP + H(+). With respect to regulation, negatively regulated by ABI2. Its function is as follows. Receptor kinase acting as an early component in abscisic acid (ABA) signaling. Required for darkness, ABA, high CO(2) and hydrogen peroxide (H(2)O(2)) induction of S-type anion currents in guard cells leading to stomatal closure, possibly via the phosphorylation and activation of the anion channel SLAC1 and as a scaffolding component. Seems to act in parallel with SRK2E/OST1 in the ABA signaling pathway which regulates stomatal movement. Binds ATP. Involved in the local and/or systemic stomatal responses (e.g. stomatal closure) to light stress. The chain is LRR receptor-like serine/threonine-protein kinase GHR1 from Arabidopsis thaliana (Mouse-ear cress).